The following is a 579-amino-acid chain: Zinc finger protein 384 (579 aa).

Positions 171–198 are disordered; the sequence is TLTEEGGGGGGGGGTVAPPKPPRGRKKK. The span at 175–185 shows a compositional bias: gly residues; that stretch reads EGGGGGGGGGT. C2H2-type zinc fingers lie at residues 229–251, 257–279, 285–307, 318–340, 346–368, 374–398, 404–426, and 434–456; these read YRCRMCSLTFYSKSEMQIHSKSH, HKCPHCSKTFANSSYLAQHIRIH, YSCNFCEKSFRQLSHLQQHTRIH, HKCPHCSKTFANTSYLAQHLRIH, YNCSYCQKAFRQLSHLQQHTRIH, YKCAHPGCEKAFTQLSNLQSHRRQH, FKCHNCHRAYTDAASLEAHLSTH, and YTCTICSRAYTSETYLMKHMRKH. The span at 500-513 shows a compositional bias: low complexity; the sequence is QAQASQASQQQQQQ. Positions 500–553 are disordered; it reads QAQASQASQQQQQQQPPPPQPPHFQSPGAAPQGGGGGDSNQNPPPQCSFDLTPY. Positions 514 to 523 are enriched in pro residues; sequence QPPPPQPPHF.

It belongs to the krueppel C2H2-type zinc-finger protein family. In terms of assembly, interacts with BCAR1. In terms of tissue distribution, expressed in osteocytes, osteoblasts, and chondrocytes in bone.

The protein resides in the nucleus. Transcription factor that binds the consensus DNA sequence [GC]AAAAA. Seems to bind and regulate the promoters of MMP1, MMP3, MMP7 and COL1A1. The protein is Zinc finger protein 384 (Znf384) of Rattus norvegicus (Rat).